A 98-amino-acid polypeptide reads, in one-letter code: ACNDLCGPCGPTPLANSCNEPCVRQCEASRVVIQPSTVVVTLPGPILSSFPQSTAVGGSASSSVGNELLASQGVPYFGGGFGLGGLGCFSGRRGCYPC.

Position 1 is an N-acetylalanine (alanine 1).

It belongs to the avian keratin family. In terms of assembly, the avian keratins (F-ker, S-ker, C-ker and B-ker) are a complex mixture of very similar polypeptides.

This Chroicocephalus novaehollandiae (Silver gull) protein is Feather keratin.